Consider the following 485-residue polypeptide: Terminase, large subunit (485 aa).

Residues 17–22 (KPHHVQ), 40–45 (QSGKSE), and arginine 79 contribute to the ADP site. Residues 22-197 (QLAIHRSTAK…EFFLMGWRGG (176 aa)) form an ATPase activity region. Positions 97 and 99 each coordinate ATP. The short motif at 125 to 131 (SEFRGKS) is the Walker A motif element. Residues 145 to 150 (FVILDE) carry the Walker B motif motif. The active-site For ATPase activity is glutamate 150. The nuclease stretch occupies residues 256-438 (SNSVFSGLDM…DIVMSLALAY (183 aa)). Aspartate 294, aspartate 347, and aspartate 429 together coordinate Mg(2+).

Belongs to the Tequatrovirus large terminase family. As to quaternary structure, interacts with the terminase small subunit; the active complex is composed of a pentamer of terminase large subunits and a dodecamer of terminase small subunits. Interacts with the portal protein. It depends on Mg(2+) as a cofactor.

The terminase large subunit acts as an ATP driven molecular motor necessary for viral DNA translocation into empty capsids and as an endonuclease that cuts the viral genome to initiate and to end a packaging reaction The terminase lies at a unique vertex of the procapsid and is composed of two subunits, a small terminase subunit involved in viral DNA recognition (packaging sequence), and a large terminase subunit possessing endonucleolytic and ATPase activities. Both terminase subunits heterooligomerize and are docked on the portal protein to form the packaging machine. The terminase large subunit exhibits endonuclease activity and cleaves the viral genome concatemer. Once the capsid is packaged with the DNA, the terminase complex is substituted by the tail. The chain is Terminase, large subunit from Thermus thermophilus (Thermus thermophilus phage P23-45).